The sequence spans 466 residues: 3-isopropylmalate dehydratase large subunit (466 aa).

3 residues coordinate [4Fe-4S] cluster: Cys-347, Cys-407, and Cys-410.

It belongs to the aconitase/IPM isomerase family. LeuC type 1 subfamily. As to quaternary structure, heterodimer of LeuC and LeuD. Requires [4Fe-4S] cluster as cofactor.

It catalyses the reaction (2R,3S)-3-isopropylmalate = (2S)-2-isopropylmalate. It functions in the pathway amino-acid biosynthesis; L-leucine biosynthesis; L-leucine from 3-methyl-2-oxobutanoate: step 2/4. Catalyzes the isomerization between 2-isopropylmalate and 3-isopropylmalate, via the formation of 2-isopropylmaleate. The polypeptide is 3-isopropylmalate dehydratase large subunit (Shewanella sediminis (strain HAW-EB3)).